The chain runs to 374 residues: UDP-N-acetylglucosamine--N-acetylmuramyl-(pentapeptide) pyrophosphoryl-undecaprenol N-acetylglucosamine transferase (374 aa).

Residues 10-12 (TGG), N124, R166, S196, and Q294 contribute to the UDP-N-acetyl-alpha-D-glucosamine site.

It belongs to the glycosyltransferase 28 family. MurG subfamily.

Its subcellular location is the cell membrane. The catalysed reaction is di-trans,octa-cis-undecaprenyl diphospho-N-acetyl-alpha-D-muramoyl-L-alanyl-D-glutamyl-meso-2,6-diaminopimeloyl-D-alanyl-D-alanine + UDP-N-acetyl-alpha-D-glucosamine = di-trans,octa-cis-undecaprenyl diphospho-[N-acetyl-alpha-D-glucosaminyl-(1-&gt;4)]-N-acetyl-alpha-D-muramoyl-L-alanyl-D-glutamyl-meso-2,6-diaminopimeloyl-D-alanyl-D-alanine + UDP + H(+). The protein operates within cell wall biogenesis; peptidoglycan biosynthesis. In terms of biological role, cell wall formation. Catalyzes the transfer of a GlcNAc subunit on undecaprenyl-pyrophosphoryl-MurNAc-pentapeptide (lipid intermediate I) to form undecaprenyl-pyrophosphoryl-MurNAc-(pentapeptide)GlcNAc (lipid intermediate II). The sequence is that of UDP-N-acetylglucosamine--N-acetylmuramyl-(pentapeptide) pyrophosphoryl-undecaprenol N-acetylglucosamine transferase from Symbiobacterium thermophilum (strain DSM 24528 / JCM 14929 / IAM 14863 / T).